A 136-amino-acid polypeptide reads, in one-letter code: uncharacterized protein (136 aa).

This is an uncharacterized protein from Pseudomonas amygdali pv. tabaci (Pseudomonas syringae pv. tabaci).